The chain runs to 66 residues: Large ribosomal subunit protein bL35 (66 aa).

Belongs to the bacterial ribosomal protein bL35 family.

This is Large ribosomal subunit protein bL35 from Synechococcus sp. (strain RCC307).